A 210-amino-acid polypeptide reads, in one-letter code: Large ribosomal subunit protein bL25 (210 aa).

Positions 191–200 are enriched in low complexity; it reads EAPAEGAAAP. Residues 191–210 form a disordered region; it reads EAPAEGAAAPAPAPAKKGKK.

Belongs to the bacterial ribosomal protein bL25 family. CTC subfamily. In terms of assembly, part of the 50S ribosomal subunit; part of the 5S rRNA/L5/L18/L25 subcomplex. Contacts the 5S rRNA. Binds to the 5S rRNA independently of L5 and L18.

In terms of biological role, this is one of the proteins that binds to the 5S RNA in the ribosome where it forms part of the central protuberance. This Paracidovorax citrulli (strain AAC00-1) (Acidovorax citrulli) protein is Large ribosomal subunit protein bL25.